The following is a 106-amino-acid chain: MNRIYACPVADVPEGEALRIDTSPVIALFNVGGEFYAINDRCSHGNASMSEGYLEDDATVECPLHAASFCLKTGKALCLPATDPLSTYPVHVEGGDIFIDLPEAQP.

In terms of domain architecture, Rieske spans 4-99 (IYACPVADVP…VHVEGGDIFI (96 aa)). C42, H44, C62, and H65 together coordinate [2Fe-2S] cluster.

It belongs to the bacterial ring-hydroxylating dioxygenase ferredoxin component family. This dioxygenase system consists of four proteins: the two subunits of the hydroxylase component (HcaE and HcaF), a ferredoxin (HcaC) and a ferredoxin reductase (HcaD). The cofactor is [2Fe-2S] cluster.

The protein operates within aromatic compound metabolism; 3-phenylpropanoate degradation. In terms of biological role, part of the multicomponent 3-phenylpropionate dioxygenase, that converts 3-phenylpropionic acid (PP) and cinnamic acid (CI) into 3-phenylpropionate-dihydrodiol (PP-dihydrodiol) and cinnamic acid-dihydrodiol (CI-dihydrodiol), respectively. This protein seems to be a 2Fe-2S ferredoxin. In Shigella flexneri serotype 5b (strain 8401), this protein is 3-phenylpropionate/cinnamic acid dioxygenase ferredoxin subunit.